Consider the following 1454-residue polypeptide: Probable cleavage and polyadenylation specificity factor subunit 1 (1454 aa).

Residues 736 to 765 (KQSNTRKRKRLGHDAIQSSRGGEQSDAIDP) are disordered.

Belongs to the CPSF1 family. CPSF is a heterotetramer composed of four distinct subunits 160 (cpsf-1), 100 (cpsf-2), 70 (cpsf-3), and 30 kDa (cpsf-4).

It is found in the nucleus. Its function is as follows. CPSF plays a key role in pre-mRNA 3'-end formation, recognizing the AAUAAA signal sequence and interacting with poly(A)polymerase and other factors to bring about cleavage and poly(A) addition. This subunit is involved in the RNA recognition step of the polyadenylation reaction. The chain is Probable cleavage and polyadenylation specificity factor subunit 1 (cpsf-1) from Caenorhabditis elegans.